Here is a 341-residue protein sequence, read N- to C-terminus: C2 calcium-dependent domain-containing protein 4D (341 aa).

A compositionally biased stretch (basic and acidic residues) spans 56-71 (RLRDPRGAEGRVDRNP). Disordered stretches follow at residues 56 to 75 (RLRD…GGRN) and 134 to 176 (CRAP…PYAP). Residues 139–149 (SDTASSPDSSP) are compositionally biased toward low complexity. The 127-residue stretch at 205–331 (RGGQLRLSTE…PPLAGGLGPG (127 aa)) folds into the C2 domain.

This Mus musculus (Mouse) protein is C2 calcium-dependent domain-containing protein 4D (C2cd4d).